A 1073-amino-acid polypeptide reads, in one-letter code: Serine/threonine-protein kinase 11-interacting protein (1073 aa).

LRR repeat units lie at residues 166-187 (ELQT…LQLL), 189-210 (ALRV…LTTL), 212-233 (ELEY…GIFS), 236-257 (KLLT…EQLV), 258-279 (NLQH…APLS), and 283-304 (YLKK…RSAT). Disordered regions lie at residues 389-409 (VKVR…SQAL), 455-533 (SRSA…EKPE), 724-817 (EVSS…QGMK), and 834-859 (MGSY…SEET). Acidic residues predominate over residues 515–532 (REEEADELMLGEEEDEKP). Polar residues-rich tracts occupy residues 779–788 (MDTSNSTRTP) and 843–859 (RGPT…SEET).

The protein belongs to the STK11IP family.

Its subcellular location is the cytoplasm. This Gallus gallus (Chicken) protein is Serine/threonine-protein kinase 11-interacting protein (STK11IP).